The following is a 30-amino-acid chain: XXXGLXIVDAFVQPNLILQGDAKVEDNGXL.

This sequence belongs to the leguminous lectin family.

In terms of biological role, lectin and alpha-amylase inhibitor. Acts as a defensive protein against insects. The protein is Putative alpha-amylase inhibitor of Phaseolus vulgaris (Kidney bean).